The sequence spans 295 residues: MNATALLIGLGPLLGWGLFPTIASKIGGRPVNQILGTSLGTLIFAAIFSMINGLAFPAGMDLFFSILSGVGWACAQIITFKCFTMIGSSRAMPVTTAFQLLGASLWGVFFLGNWPGATAKLLGAFALVLIMIGAKMTVWSETESAESAGIMKKAVLLLAVGEIGYWAYSAAPQATAIDGMHAFLPQAIGMVIVAVIYSAVVTIKGGEISPFIEAVSYKQIFSGFFFAFAALTYLISAQPDMNGLATGFILSQTSVVLATLTGIWFLGQKKTAKEMTVTIIGLVLILAAATITVMI.

Transmembrane regions (helical) follow at residues 5-24 (ALLIGLGPLLGWGLFPTIAS), 34-56 (ILGTSLGTLIFAAIFSMINGLAF), 63-80 (FFSILSGVGWACAQIITF), 95-114 (TTAFQLLGASLWGVFFLGNW), 121-139 (LLGAFALVLIMIGAKMTVW), 154-171 (AVLLLAVGEIGYWAYSAA), 183-205 (FLPQAIGMVIVAVIYSAVVTIKG), 220-237 (IFSGFFFAFAALTYLISA), 244-266 (LATGFILSQTSVVLATLTGIWFL), and 276-293 (TVTIIGLVLILAAATITV).

This sequence belongs to the GRP transporter (TC 2.A.7.5) family.

Its subcellular location is the cell membrane. Its function is as follows. Could be involved in the uptake of ribose. In Enterococcus faecalis (strain ATCC 700802 / V583), this protein is Putative ribose uptake protein RbsU (rbsU).